The primary structure comprises 558 residues: Formate--tetrahydrofolate ligase (558 aa).

66–73 (TPAGEGKT) contacts ATP.

The protein belongs to the formate--tetrahydrofolate ligase family.

The catalysed reaction is (6S)-5,6,7,8-tetrahydrofolate + formate + ATP = (6R)-10-formyltetrahydrofolate + ADP + phosphate. Its pathway is one-carbon metabolism; tetrahydrofolate interconversion. The protein is Formate--tetrahydrofolate ligase of Neisseria meningitidis serogroup C / serotype 2a (strain ATCC 700532 / DSM 15464 / FAM18).